The following is a 231-amino-acid chain: UPF0758 protein YsxA (231 aa).

One can recognise an MPN domain in the interval 109–231 (VIRSPEDGAN…FVSLKEKGYL (123 aa)). Positions 180, 182, and 193 each coordinate Zn(2+). The JAMM motif signature appears at 180-193 (HNHPSGDPTPSRED).

This sequence belongs to the UPF0758 family.

The chain is UPF0758 protein YsxA (ysxA) from Bacillus subtilis (strain 168).